A 566-amino-acid chain; its full sequence is Peroxisomal targeting signal receptor (566 aa).

Cysteine 5 is covalently cross-linked (Glycyl cysteine thioester (Cys-Gly) (interchain with G-Cter in ubiquitin)). Residues 6–28 (SVGSNPLAQLNKHAQQNPALRQV) are amphipathic helix 1 (AH1). Lysine 17 participates in a covalent cross-link: Glycyl lysine isopeptide (Lys-Gly) (interchain with G-Cter in ubiquitin). Residues 53–71 (RFQMDQFMNRSPGFSDGQL) form an amphipathic helix 2 (AH2) region. The tract at residues 88-159 (GLKKQDSGSS…IGRPMMHTGI (72 aa)) is disordered. The span at 94–142 (SGSSNMSAGDTAQHSRSWGNEFNSRSPQQGLASRVNNVERISNTNSMSS) shows a compositional bias: polar residues. The WxxxF/Y motif 1 motif lies at 111 to 115 (WGNEF). The amphipathic helix 3 (AH3) stretch occupies residues 145-151 (PGMSRIG). Residues 187-191 (WNEQF) carry the WxxxF/Y motif 2 motif. The segment at 225–241 (FQEVWDKLQAETADNNL) is amphipathic helix 4 (AH4). A WxxxF/Y motif 3 motif is present at residues 248-252 (WEKDY). TPR repeat units lie at residues 277-311 (NPNAYEIGCILMENGAKLSEAALAFEAAVQEDPAH), 312-345 (VDAWLKLGLVQTQNEKEMNGISALEQCLSLDPTN), 416-449 (PEVQLGLGTLFYANEEFGKTIDCFRTALEVNPND), 451-483 (LMWNRLGASLANSNRSEEAIQAYHKALALKPSF), and 485-517 (RARYNLAISSMNIGCYKEAAESLLSALSMHEVE).

It belongs to the peroxisomal targeting signal receptor family. As to quaternary structure, interacts (via WxxxF/Y and LVxEF motifs) with PEX14; promoting translocation through the PEX13-PEX14 docking complex. Monoubiquitinated at Cys-5 by PEX2 during PEX5 passage through the retrotranslocation channel: monoubiquitination acts as a signal for PEX5 extraction and is required for proper export from peroxisomes and recycling. When PEX5 recycling is compromised, polyubiquitinated at Lys-17 by PEX10 during its passage through the retrotranslocation channel, leading to its degradation.

It localises to the cytoplasm. The protein resides in the cytosol. Its subcellular location is the peroxisome matrix. Its function is as follows. Receptor that mediates peroxisomal import of proteins containing a C-terminal PTS1-type tripeptide peroxisomal targeting signal (SKL-type). Binds to cargo proteins containing a PTS1 peroxisomal targeting signal in the cytosol, and translocates them into the peroxisome matrix by passing through the PEX13-PEX14 docking complex along with cargo proteins. PEX5 receptor is then retrotranslocated into the cytosol, leading to release of bound cargo in the peroxisome matrix, and reset for a subsequent peroxisome import cycle. In Kluyveromyces lactis (strain ATCC 8585 / CBS 2359 / DSM 70799 / NBRC 1267 / NRRL Y-1140 / WM37) (Yeast), this protein is Peroxisomal targeting signal receptor (PEX5).